The primary structure comprises 345 residues: Anthranilate phosphoribosyltransferase (345 aa).

5-phospho-alpha-D-ribose 1-diphosphate-binding positions include glycine 84, 87–88 (GD), threonine 92, 94–97 (NIST), 112–120 (KHGGRGVSS), and serine 124. Residue glycine 84 participates in anthranilate binding. Position 96 (serine 96) interacts with Mg(2+). Position 170 (arginine 170) interacts with anthranilate. Residues aspartate 229 and glutamate 230 each coordinate Mg(2+).

The protein belongs to the anthranilate phosphoribosyltransferase family. Homodimer. Requires Mg(2+) as cofactor.

The catalysed reaction is N-(5-phospho-beta-D-ribosyl)anthranilate + diphosphate = 5-phospho-alpha-D-ribose 1-diphosphate + anthranilate. It participates in amino-acid biosynthesis; L-tryptophan biosynthesis; L-tryptophan from chorismate: step 2/5. In terms of biological role, catalyzes the transfer of the phosphoribosyl group of 5-phosphorylribose-1-pyrophosphate (PRPP) to anthranilate to yield N-(5'-phosphoribosyl)-anthranilate (PRA). This chain is Anthranilate phosphoribosyltransferase, found in Paracidovorax citrulli (strain AAC00-1) (Acidovorax citrulli).